We begin with the raw amino-acid sequence, 142 residues long: Hemoglobin subunit alpha-4 (142 aa).

Residues 2–142 (VLSAADKSNV…VSTVLTSKYR (141 aa)) form the Globin domain. Residue histidine 59 participates in O2 binding. Heme b is bound at residue histidine 88.

It belongs to the globin family. As to quaternary structure, heterotetramer of two alpha chains and two beta chains. Red blood cells.

Its function is as follows. Involved in oxygen transport from the lung to the various peripheral tissues. This Bubalus bubalis (Domestic water buffalo) protein is Hemoglobin subunit alpha-4.